A 470-amino-acid chain; its full sequence is ATP synthase subunit beta (470 aa).

An ATP-binding site is contributed by 157-164; the sequence is GGAGVGKT.

Belongs to the ATPase alpha/beta chains family. F-type ATPases have 2 components, CF(1) - the catalytic core - and CF(0) - the membrane proton channel. CF(1) has five subunits: alpha(3), beta(3), gamma(1), delta(1), epsilon(1). CF(0) has three main subunits: a(1), b(2) and c(9-12). The alpha and beta chains form an alternating ring which encloses part of the gamma chain. CF(1) is attached to CF(0) by a central stalk formed by the gamma and epsilon chains, while a peripheral stalk is formed by the delta and b chains.

The protein resides in the cell inner membrane. The enzyme catalyses ATP + H2O + 4 H(+)(in) = ADP + phosphate + 5 H(+)(out). Produces ATP from ADP in the presence of a proton gradient across the membrane. The catalytic sites are hosted primarily by the beta subunits. This Citrifermentans bemidjiense (strain ATCC BAA-1014 / DSM 16622 / JCM 12645 / Bem) (Geobacter bemidjiensis) protein is ATP synthase subunit beta.